We begin with the raw amino-acid sequence, 208 residues long: Large ribosomal subunit protein bL25 (208 aa).

Positions 1 to 20 (MANHQIKAQRRKDEGKGASR) are disordered.

This sequence belongs to the bacterial ribosomal protein bL25 family. CTC subfamily. Part of the 50S ribosomal subunit; part of the 5S rRNA/L5/L18/L25 subcomplex. Contacts the 5S rRNA. Binds to the 5S rRNA independently of L5 and L18.

Its function is as follows. This is one of the proteins that binds to the 5S RNA in the ribosome where it forms part of the central protuberance. The protein is Large ribosomal subunit protein bL25 of Xylella fastidiosa (strain 9a5c).